A 196-amino-acid chain; its full sequence is Ribonuclease H (196 aa).

The RNase H type-1 domain occupies Leu-58–Lys-196. Mg(2+) is bound by residues Asp-71, Glu-109, Asp-132, and Asp-192.

It belongs to the RNase H family. It depends on Mn(2+) as a cofactor. Requires Mg(2+) as cofactor.

It localises to the cytoplasm. The catalysed reaction is Endonucleolytic cleavage to 5'-phosphomonoester.. Its function is as follows. Endonuclease that specifically degrades the RNA of RNA-DNA hybrids. The sequence is that of Ribonuclease H (rnhA) from Halalkalibacterium halodurans (strain ATCC BAA-125 / DSM 18197 / FERM 7344 / JCM 9153 / C-125) (Bacillus halodurans).